The sequence spans 201 residues: MSFSTLMDKRERGSFDSQFLIAMPGLDDGNFARSVIYICAHSDAGAMGFIINRPQQITFTDILLHLKLVDSNDAIMLPNRTREFPIQCGGPVESGRGFVLHSDDYLSESSIPVSDDISLTATLDIVRAISNGRGPQKATMMLGYAGWGPGQLENEIANNGWLNCPAAEELIFDRGLDNKYERALALMGVDARMLSTDAGHA.

It belongs to the UPF0301 (AlgH) family.

The chain is UPF0301 protein Atu0781 from Agrobacterium fabrum (strain C58 / ATCC 33970) (Agrobacterium tumefaciens (strain C58)).